A 356-amino-acid chain; its full sequence is Nitric oxide synthase oxygenase (356 aa).

Position 63 (Cys-63) interacts with heme.

Belongs to the NOS family. Bacterial NOS oxygenase subfamily. Homodimer. Forms a complex with trpS2; one homodimer of trpS2 binds one homodimer of nos. Requires heme as cofactor. It depends on (6S)-5,6,7,8-tetrahydrofolate as a cofactor.

It carries out the reaction 3 reduced [flavodoxin] + 2 L-arginine + 4 O2 = 3 oxidized [flavodoxin] + 2 L-citrulline + 2 nitric oxide + 4 H2O + 5 H(+). Nitric oxide synthase activity is increased by trpS2. Its function is as follows. Catalyzes the production of nitric oxide. The complex between TrpRS II and nitric oxide synthase oxygenase catalyzes the regioselective nitration of tryptophan at the 4-position. The chain is Nitric oxide synthase oxygenase (nos) from Deinococcus radiodurans (strain ATCC 13939 / DSM 20539 / JCM 16871 / CCUG 27074 / LMG 4051 / NBRC 15346 / NCIMB 9279 / VKM B-1422 / R1).